The primary structure comprises 288 residues: Glycine--tRNA ligase alpha subunit (288 aa).

Belongs to the class-II aminoacyl-tRNA synthetase family. In terms of assembly, tetramer of two alpha and two beta subunits.

Its subcellular location is the cytoplasm. It catalyses the reaction tRNA(Gly) + glycine + ATP = glycyl-tRNA(Gly) + AMP + diphosphate. The polypeptide is Glycine--tRNA ligase alpha subunit (Rickettsia peacockii (strain Rustic)).